The sequence spans 341 residues: tRNA N6-adenosine threonylcarbamoyltransferase (341 aa).

Positions 113 and 117 each coordinate Fe cation. Substrate is bound by residues 136-140 (IISGG), Asp169, Gly182, and Asn280. Asp308 is a binding site for Fe cation.

This sequence belongs to the KAE1 / TsaD family. Fe(2+) serves as cofactor.

Its subcellular location is the cytoplasm. It carries out the reaction L-threonylcarbamoyladenylate + adenosine(37) in tRNA = N(6)-L-threonylcarbamoyladenosine(37) in tRNA + AMP + H(+). Functionally, required for the formation of a threonylcarbamoyl group on adenosine at position 37 (t(6)A37) in tRNAs that read codons beginning with adenine. Is involved in the transfer of the threonylcarbamoyl moiety of threonylcarbamoyl-AMP (TC-AMP) to the N6 group of A37, together with TsaE and TsaB. TsaD likely plays a direct catalytic role in this reaction. The chain is tRNA N6-adenosine threonylcarbamoyltransferase from Anaplasma marginale (strain St. Maries).